Here is a 432-residue protein sequence, read N- to C-terminus: Amino-acid acetyltransferase (432 aa).

The N-acetyltransferase domain maps to 286-425 (EQLREAGIED…ASLYNFQRNS (140 aa)).

Belongs to the acetyltransferase family. ArgA subfamily.

The protein localises to the cytoplasm. The enzyme catalyses L-glutamate + acetyl-CoA = N-acetyl-L-glutamate + CoA + H(+). Its pathway is amino-acid biosynthesis; L-arginine biosynthesis; N(2)-acetyl-L-ornithine from L-glutamate: step 1/4. The protein is Amino-acid acetyltransferase of Pseudomonas paraeruginosa (strain DSM 24068 / PA7) (Pseudomonas aeruginosa (strain PA7)).